The primary structure comprises 330 residues: ADP-L-glycero-D-manno-heptose-6-epimerase (330 aa).

NADP(+)-binding positions include 10–11 (FI), 31–32 (DD), K38, K53, 74–78 (QGACS), and N91. Y138 acts as the Proton acceptor in catalysis. K142 contacts NADP(+). N167 provides a ligand contact to substrate. Residues V168 and K176 each contribute to the NADP(+) site. K176 acts as the Proton acceptor in catalysis. Residues R178, H185, 199-202 (FAGW), R212, and Y291 contribute to the substrate site.

It belongs to the NAD(P)-dependent epimerase/dehydratase family. HldD subfamily. As to quaternary structure, homopentamer. It depends on NADP(+) as a cofactor.

It catalyses the reaction ADP-D-glycero-beta-D-manno-heptose = ADP-L-glycero-beta-D-manno-heptose. It participates in nucleotide-sugar biosynthesis; ADP-L-glycero-beta-D-manno-heptose biosynthesis; ADP-L-glycero-beta-D-manno-heptose from D-glycero-beta-D-manno-heptose 7-phosphate: step 4/4. Its function is as follows. Catalyzes the interconversion between ADP-D-glycero-beta-D-manno-heptose and ADP-L-glycero-beta-D-manno-heptose via an epimerization at carbon 6 of the heptose. This Bordetella petrii (strain ATCC BAA-461 / DSM 12804 / CCUG 43448) protein is ADP-L-glycero-D-manno-heptose-6-epimerase.